The chain runs to 484 residues: Protein nucleotidyltransferase YdiU (484 aa).

ATP-binding residues include Gly87, Gly89, Arg90, Lys110, Asp122, Gly123, Arg173, and Arg180. Asp249 acts as the Proton acceptor in catalysis. Positions 250 and 259 each coordinate Mg(2+). Asp259 lines the ATP pocket. A disordered region spans residues 463–484; that stretch reads EQEKYAELPPPSDRPYRTFCGT.

The protein belongs to the SELO family. Mg(2+) is required as a cofactor. The cofactor is Mn(2+).

It catalyses the reaction L-seryl-[protein] + ATP = 3-O-(5'-adenylyl)-L-seryl-[protein] + diphosphate. It carries out the reaction L-threonyl-[protein] + ATP = 3-O-(5'-adenylyl)-L-threonyl-[protein] + diphosphate. The enzyme catalyses L-tyrosyl-[protein] + ATP = O-(5'-adenylyl)-L-tyrosyl-[protein] + diphosphate. The catalysed reaction is L-histidyl-[protein] + UTP = N(tele)-(5'-uridylyl)-L-histidyl-[protein] + diphosphate. It catalyses the reaction L-seryl-[protein] + UTP = O-(5'-uridylyl)-L-seryl-[protein] + diphosphate. It carries out the reaction L-tyrosyl-[protein] + UTP = O-(5'-uridylyl)-L-tyrosyl-[protein] + diphosphate. Functionally, nucleotidyltransferase involved in the post-translational modification of proteins. It can catalyze the addition of adenosine monophosphate (AMP) or uridine monophosphate (UMP) to a protein, resulting in modifications known as AMPylation and UMPylation. This Geobacillus kaustophilus (strain HTA426) protein is Protein nucleotidyltransferase YdiU.